A 244-amino-acid chain; its full sequence is uncharacterized protein (244 aa).

This is an uncharacterized protein from Sulfolobus spindle-shape virus 1 (SSV1).